Reading from the N-terminus, the 84-residue chain is UPF0153 protein YeiW (84 aa).

This sequence belongs to the UPF0153 family.

This chain is UPF0153 protein YeiW (yeiW), found in Escherichia coli (strain K12).